We begin with the raw amino-acid sequence, 282 residues long: 1,4-dihydroxy-6-naphtoate synthase (282 aa).

Residues 57-59 and 109-110 each bind substrate; these read KVS and TA. H153 functions as the Proton acceptor in the catalytic mechanism.

The protein belongs to the MqnA/MqnD family. MqnD subfamily.

The catalysed reaction is cyclic dehypoxanthinylfutalosinate = 1,4-dihydroxy-6-naphthoate + dihydroxyacetone. It participates in quinol/quinone metabolism; menaquinone biosynthesis. Catalyzes the conversion of cyclic dehypoxanthine futalosine (cyclic DHFL) into 1,4-dihydroxy-6-naphthoate, a step in the biosynthesis of menaquinone (MK, vitamin K2). This is 1,4-dihydroxy-6-naphtoate synthase from Streptomyces coelicolor (strain ATCC BAA-471 / A3(2) / M145).